Here is a 615-residue protein sequence, read N- to C-terminus: MAVYVGMLRVARLCARSPRVLGARVGLSRVWQEARLWGVRPLSSGELDHTVPLPVGGFSYVQGHVGLHLSNKTVGRCLDATAQRVPDQEALVVHHENIRLTFAQLKEEVDKAASGLLSIGLRKGDRLGMWGPNSYAWVLMQLATAQAGIILVSVNPAYQAMELEYALKKVGCKALVFPKQFKTQQYYNILKQICPEVEKAQPGALKSQRLPDLTTVISVDAHLPGTLLLDEVVAAGSQEQNLTRLRHTQQFLSCHDPINIQFTSGTTGSPKGATLSHYNIVNNANMIGQRLRLHQKTPEESRVVLPSPLYHCLGSVGGTMVSLMHGVTLILCSPVFEGKKTLEAISRERGCFLYGTPTMFVDVLNQPDFSSYDISTMRGGVIAGSPAPPELIRAIINKLNMKELVVAYGTTENSPVTFMNFTEDTVEQKAESVGRVMPHTEAQIVNTETGTLTELNTPGELCIRGYCVMLGYWGEPQKTEEAIGQDKWYRTGDIAMMDEQGFCKIVGRSKDMIIRGGENIYPAELEDFFHTHPQVQEVQVVGVKDDRMGEEICACIRLKEGEKTTAEEIKAFCKGKISHFKIPRYIVFVTNYPLTVSGKIQKFKLREQMEQHLNL.

The transit peptide at 1-42 (MAVYVGMLRVARLCARSPRVLGARVGLSRVWQEARLWGVRPL) directs the protein to the mitochondrion. K179 carries the post-translational modification N6-acetyllysine. At K182 the chain carries N6-acetyllysine; alternate. K182 carries the post-translational modification N6-succinyllysine; alternate. K199 is modified (N6-acetyllysine). Position 263–271 (263–271 (TSGTTGSPK)) interacts with ATP. An N6-acetyllysine mark is found at K340 and K398. The residue at position 478 (K478) is an N6-succinyllysine. Positions 493 and 508 each coordinate ATP. K510 carries the post-translational modification N6-acetyllysine. K544 and K570 each carry N6-acetyllysine; alternate. K544 and K570 each carry N6-succinyllysine; alternate. Position 599 (K599) interacts with ATP. K599 bears the N6-succinyllysine mark.

This sequence belongs to the ATP-dependent AMP-binding enzyme family.

The protein localises to the mitochondrion. It catalyses the reaction a medium-chain fatty acid + ATP + CoA = a medium-chain fatty acyl-CoA + AMP + diphosphate. The enzyme catalyses octanoate + ATP + CoA = octanoyl-CoA + AMP + diphosphate. Its function is as follows. Acyl-CoA synthases catalyze the initial reaction in fatty acid metabolism, by forming a thioester with CoA. Has some preference toward medium-chain substrates. Plays a role in adipocyte differentiation. The chain is Medium-chain acyl-CoA ligase ACSF2, mitochondrial from Bos taurus (Bovine).